The primary structure comprises 183 residues: Threonylcarbamoyl-AMP synthase (183 aa).

A YrdC-like domain is found at 1–183 (MNFTEIAEKL…LLTDQLIREG (183 aa)).

The protein belongs to the SUA5 family. TsaC subfamily.

The protein localises to the cytoplasm. The enzyme catalyses L-threonine + hydrogencarbonate + ATP = L-threonylcarbamoyladenylate + diphosphate + H2O. In terms of biological role, required for the formation of a threonylcarbamoyl group on adenosine at position 37 (t(6)A37) in tRNAs that read codons beginning with adenine. Catalyzes the conversion of L-threonine, HCO(3)(-)/CO(2) and ATP to give threonylcarbamoyl-AMP (TC-AMP) as the acyladenylate intermediate, with the release of diphosphate. The polypeptide is Threonylcarbamoyl-AMP synthase (Actinobacillus succinogenes (strain ATCC 55618 / DSM 22257 / CCUG 43843 / 130Z)).